Here is a 504-residue protein sequence, read N- to C-terminus: Fumitremorgin C monooxygenase (504 aa).

The chain crosses the membrane as a helical span at residues 9–29 (LPYPGVVGASLLVILGIILLF). Cysteine 442 contacts heme.

This sequence belongs to the cytochrome P450 family. The cofactor is heme.

Its subcellular location is the membrane. It carries out the reaction fumitremorgin C + 2 reduced [NADPH--hemoprotein reductase] + 2 O2 = 12alpha,13alpha-dihydroxyfumitremorgin C + 2 oxidized [NADPH--hemoprotein reductase] + 2 H2O + 2 H(+). Its pathway is mycotoxin biosynthesis. Cytochrome P450 monooxygenase; part of the gene cluster that mediates the biosynthesis of fumitremorgins, indole alkaloids that carry not only intriguing chemical structures, but also interesting biological and pharmacological activities. The biosynthesis of fumitremorgin-type alkaloids begins by condensation of the two amino acids L-tryptophan and L-proline to brevianamide F, catalyzed by the non-ribosomal peptide synthetase ftmPS/ftmA. Brevianamide F is then prenylated by the prenyltransferase ftmPT1/ftmB in the presence of dimethylallyl diphosphate, resulting in the formation of tryprostatin B. The three cytochrome P450 monooxygenases, ftmP450-1/ftmC, ftmP450-2/ftmE and ftmP450-3/FtmG, are responsible for the conversion of tryprostatin B to 6-hydroxytryprostatin B, tryprostatin A to fumitremorgin C and fumitremorgin C to 12,13-dihydroxyfumitremorgin C, respectively. The putative methyltransferase ftmMT/ftmD is expected for the conversion of 6-hydroxytryprostatin B to tryprostatin A. FtmPT2/FtmH catalyzes the prenylation of 12,13-dihydroxyfumitre-morgin C in the presence of dimethylallyl diphosphate, resulting in the formation of fumitremorgin B. Fumitremorgin B is further converted to verruculogen by ftmOx1/ftmF via the insertion of an endoperoxide bond between the two prenyl moieties. Finally, verruculogen is further converted to fumitremorgin A by the verruculogen prenyltransferase ftmPT3. This chain is Fumitremorgin C monooxygenase, found in Neosartorya fischeri (strain ATCC 1020 / DSM 3700 / CBS 544.65 / FGSC A1164 / JCM 1740 / NRRL 181 / WB 181) (Aspergillus fischerianus).